The primary structure comprises 288 residues: Putative sugar uptake protein gbs2116 (288 aa).

10 consecutive transmembrane segments (helical) span residues 4 to 26 (LLIA…KIGG), 33 to 50 (FGMT…WLFK), 55 to 72 (TASL…WSVG), 85 to 107 (VSVA…GALV), 117 to 134 (FILG…FYFS), 154 to 171 (FATI…AVLF), 181 to 200 (AVIL…FMKF), 207 to 229 (VVVK…LLAA), 234 to 256 (LAIA…ILFL), and 268 to 285 (VVMG…LGIV).

This sequence belongs to the GRP transporter (TC 2.A.7.5) family.

It is found in the cell membrane. This is Putative sugar uptake protein gbs2116 from Streptococcus agalactiae serotype III (strain NEM316).